The chain runs to 341 residues: Transcription factor JunD (341 aa).

The segment at 21-49 (VAGAAGAPGGGGFAPPGRAFPGAPPTSSM) is disordered. The Menin-binding motif (MBM) motif lies at 35 to 47 (PPGRAFPGAPPTS). An MAP kinase docking motif; essential for its phosphorylation motif is present at residues 51 to 60 (KKDALTLSLA). The interval 65 to 85 (AGLKPGSATAPSALRPDGAPD) is disordered. A Phosphoserine modification is found at Ser-90. Ser-100 is subject to Phosphoserine; by MAPK8. Thr-117 carries the post-translational modification Phosphothreonine. Positions 155–176 (AATAATSGAPAPPAPADLAATP) are disordered. Phosphoserine occurs at positions 245, 249, and 253. Positions 262-289 (RIKAERKRLRNRIAASKCRKRKLERISR) are basic motif. The region spanning 262-325 (RIKAERKRLR…AQLKQKVLSH (64 aa)) is the bZIP domain. The tract at residues 290–318 (LEEKVKTLKSQNTELASTASLLREQVAQL) is leucine-zipper.

The protein belongs to the bZIP family. Jun subfamily. Heterodimer; binds DNA as a heterodimer. Component of an AP-1 transcription factor complex composed of JUN-FOS heterodimers. As part of the AP-1 transcription factor complex, forms heterodimers with FOS proteins, thereby binding to the AP-1 consensus sequence and stimulating transcription. Forms heterodimers with FOSB; thereby binding to the AP-1 consensus sequence. Interacts (via MBM motif) with MEN1; this interaction represses transcriptional activation. Interacts with MAPK10; this interaction is inhibited in the presence of MEN1. Post-translationally, phosphorylated by MAP kinases MAPK8 and MAPK10; phosphorylation is inhibited in the presence of MEN1.

Its subcellular location is the nucleus. Functionally, transcription factor binding AP-1 sites. Heterodimerizes with proteins of the FOS family to form an AP-1 transcription factor complex, thereby enhancing their DNA binding activity to an AP-1 consensus sequence 3'-TGA[GC]TCA-5' and enhancing their transcriptional activity. In Rattus norvegicus (Rat), this protein is Transcription factor JunD (Jund).